A 471-amino-acid chain; its full sequence is Proline--tRNA ligase 2 (471 aa).

It belongs to the class-II aminoacyl-tRNA synthetase family. ProS type 3 subfamily. Homodimer.

It is found in the cytoplasm. The catalysed reaction is tRNA(Pro) + L-proline + ATP = L-prolyl-tRNA(Pro) + AMP + diphosphate. Functionally, catalyzes the attachment of proline to tRNA(Pro) in a two-step reaction: proline is first activated by ATP to form Pro-AMP and then transferred to the acceptor end of tRNA(Pro). This Streptomyces avermitilis (strain ATCC 31267 / DSM 46492 / JCM 5070 / NBRC 14893 / NCIMB 12804 / NRRL 8165 / MA-4680) protein is Proline--tRNA ligase 2.